Here is a 201-residue protein sequence, read N- to C-terminus: MARYTGPITRKSRRLRIDLVGGDQAFEKRPYPPGQHGRARIKESEYLLQLQEKQKARFTYGVMEKQFRRYYEEAVRQPGKTGEELLKILESRLDNVIYRAGLARTRRMARQLVSHGHFSVNGVHVNVPSYRVSQYDIIDIRDKSLDTVPFQIARETVGDRPIPSWLQVVGEHQRILIHQLPERVQIEVPLIEQLIVEYYSK.

The 67-residue stretch at Ser91–Val157 folds into the S4 RNA-binding domain.

It belongs to the universal ribosomal protein uS4 family. In terms of assembly, part of the 30S ribosomal subunit. Contacts protein S5. The interaction surface between S4 and S5 is involved in control of translational fidelity.

In terms of biological role, one of the primary rRNA binding proteins, it binds directly to 16S rRNA where it nucleates assembly of the body of the 30S subunit. Functionally, with S5 and S12 plays an important role in translational accuracy. This Mycobacterium leprae (strain Br4923) protein is Small ribosomal subunit protein uS4.